We begin with the raw amino-acid sequence, 413 residues long: uncharacterized protein (413 aa).

The protein belongs to the mycobacterial PPE family.

This is an uncharacterized protein from Mycobacterium tuberculosis (strain CDC 1551 / Oshkosh).